Reading from the N-terminus, the 124-residue chain is Ribonuclease pancreatic (124 aa).

Residues 1–24 form a disordered region; the sequence is KESSAMKFQRQHMDSSGSPSTNAN. Substrate contacts are provided by K7 and R10. Residue H12 is the Proton acceptor of the active site. Residues 14-24 are compositionally biased toward polar residues; the sequence is DSSGSPSTNAN. Intrachain disulfides connect C26/C84, C40/C95, C58/C110, and C65/C72. A glycan (N-linked (GlcNAc...) asparagine) is linked at N34. Residues 41-45, K66, and R85 contribute to the substrate site; that span reads KPVNT. The active-site Proton donor is H119.

This sequence belongs to the pancreatic ribonuclease family. As to quaternary structure, monomer. Interacts with and forms tight 1:1 complexes with RNH1. Dimerization of two such complexes may occur. Interaction with RNH1 inhibits this protein. As to expression, pancreas.

The protein resides in the secreted. It catalyses the reaction an [RNA] containing cytidine + H2O = an [RNA]-3'-cytidine-3'-phosphate + a 5'-hydroxy-ribonucleotide-3'-[RNA].. It carries out the reaction an [RNA] containing uridine + H2O = an [RNA]-3'-uridine-3'-phosphate + a 5'-hydroxy-ribonucleotide-3'-[RNA].. Endonuclease that catalyzes the cleavage of RNA on the 3' side of pyrimidine nucleotides. Acts on single-stranded and double-stranded RNA. In Chinchilla chinchilla (Short-tailed chinchilla), this protein is Ribonuclease pancreatic (RNASE1).